A 98-amino-acid polypeptide reads, in one-letter code: Large ribosomal subunit protein uL23 (98 aa).

Belongs to the universal ribosomal protein uL23 family. In terms of assembly, part of the 50S ribosomal subunit. Contacts protein L29, and trigger factor when it is bound to the ribosome.

In terms of biological role, one of the early assembly proteins it binds 23S rRNA. One of the proteins that surrounds the polypeptide exit tunnel on the outside of the ribosome. Forms the main docking site for trigger factor binding to the ribosome. In Cellvibrio japonicus (strain Ueda107) (Pseudomonas fluorescens subsp. cellulosa), this protein is Large ribosomal subunit protein uL23.